A 147-amino-acid chain; its full sequence is Large ribosomal subunit protein uL15 (147 aa).

Residues 1–14 (MKLHELRPAEGAVR) are compositionally biased toward basic and acidic residues. Residues 1–54 (MKLHELRPAEGAVRDRKRKGRGTASGLGKTAGRGSNGQKARSGGGVRPGFEGGQ) form a disordered region. Composition is skewed to gly residues over residues 23–35 (TASGLGKTAGRGS) and 42–52 (SGGGVRPGFEG).

Belongs to the universal ribosomal protein uL15 family. Part of the 50S ribosomal subunit.

Functionally, binds to the 23S rRNA. This Alkaliphilus oremlandii (strain OhILAs) (Clostridium oremlandii (strain OhILAs)) protein is Large ribosomal subunit protein uL15.